Here is a 34-residue protein sequence, read N- to C-terminus: ALVTQSNAPSWGLGRISNRQAGIRDYHYLSGTSM.

The active-site Charge relay system is serine 33.

This sequence belongs to the peptidase S8 family.

The protein localises to the secreted. It catalyses the reaction Rather non-specific hydrolysis of proteins. Preferential cleavage: -Ala-|-Xaa-, -Tyr-|-Xaa-, -Phe-|-Xaa- in small molecular substrates.. Functionally, this is an extracellular proteinase with a general specificity for apolar residues. The polypeptide is Thermomycolin (Malbranchea cinnamomea (Thermophilic fungus)).